The primary structure comprises 91 residues: Small ribosomal subunit protein bS18 (91 aa).

It belongs to the bacterial ribosomal protein bS18 family. As to quaternary structure, part of the 30S ribosomal subunit. Forms a tight heterodimer with protein bS6.

Binds as a heterodimer with protein bS6 to the central domain of the 16S rRNA, where it helps stabilize the platform of the 30S subunit. This Wolbachia pipientis wMel protein is Small ribosomal subunit protein bS18.